The primary structure comprises 422 residues: Synaptotagmin-2 (422 aa).

Residues 1–43 are disordered; sequence MRNIFKRNQEPNVAPATTTATMPLAPVAPADNSTESTGPGESQ. Over 1–60 the chain is Vesicular; sequence MRNIFKRNQEPNVAPATTTATMPLAPVAPADNSTESTGPGESQEDMFAKLKEKFFNEINK. Over residues 14-30 the composition is skewed to low complexity; that stretch reads APATTTATMPLAPVAPA. A compositionally biased stretch (polar residues) spans 31–40; that stretch reads DNSTESTGPG. Asn32 carries an N-linked (GlcNAc...) asparagine glycan. A helical transmembrane segment spans residues 61 to 87; that stretch reads IPLPPWALIAMAVVAGLLLLTCCFCIC. Residues 88-422 lie on the Cytoplasmic side of the membrane; it reads KKCCCKKKKN…EVDALLGKNK (335 aa). The segment at 102–141 is disordered; it reads GKGMKNAMNMKDMKGGQDDDDAETGLTEGEGEGEEEKEPE. A compositionally biased stretch (acidic residues) spans 119–139; that stretch reads DDDDAETGLTEGEGEGEEEKE. Thr125 and Thr128 each carry phosphothreonine. The phospholipid binding stretch occupies residues 136–382; it reads EEKEPENLGK…AIGKIFVGSN (247 aa). C2 domains follow at residues 142–261 and 273–406; these read NLGK…EEWR and KLGD…AQWH. Ca(2+) contacts are provided by Leu172, Asp173, and Asp179. Thr202 is subject to Phosphothreonine. Tyr230 is subject to Phosphotyrosine. Ca(2+) contacts are provided by Asp231, Phe232, Asp233, Ser236, Lys237, Asp239, Asp304, Asp310, Asp364, and Asp366. Thr386 carries the phosphothreonine modification.

The protein belongs to the synaptotagmin family. Homotetramer. Heterodimer; heterodimerizes with SYT1 in presence of calcium. Interacts with SCAMP5. Interacts with STON2. Interacts with PRRT2. As to quaternary structure, (Microbial infection) Interacts with C.botulinum neurotoxin type B (BoNT/B, botB). In terms of assembly, (Microbial infection) Interacts with C.botulinum neurotoxin type G (BoNT/G, botG). Ca(2+) serves as cofactor. Phosphorylation at Thr-202 by WNK1, changes the calcium requirement for SYT2-binding to phospholipid membranes.

The protein localises to the cytoplasmic vesicle. Its subcellular location is the secretory vesicle. The protein resides in the synaptic vesicle membrane. It is found in the chromaffin granule membrane. It localises to the cytoplasm. Its function is as follows. Exhibits calcium-dependent phospholipid and inositol polyphosphate binding properties. May have a regulatory role in the membrane interactions during trafficking of synaptic vesicles at the active zone of the synapse. Plays a role in dendrite formation by melanocytes. In terms of biological role, (Microbial infection) Receptor for C.botulinum neurotoxin type B (BoNT/B, botB); interaction is improved in the presence of gangliosides. The toxin binds via the vesicular domain (residues 47-60). Functionally, (Microbial infection) Receptor for C.botulinum neurotoxin type G (BoNT/G, botG); gangliosides are not required for (or only very slightly improve) binding to a membrane-anchored receptor fragment. The toxin binds via the vesicular domain (residues 47-55). The polypeptide is Synaptotagmin-2 (Mus musculus (Mouse)).